A 141-amino-acid chain; its full sequence is Hydroperoxide reductase (141 aa).

It belongs to the OsmC/Ohr family. As to quaternary structure, homodimer.

It localises to the cytoplasm. Its function is as follows. Reduces organic and inorganic peroxide substrates. Protects the cell against oxidative stress. This is Hydroperoxide reductase from Mycoplasma genitalium (strain ATCC 33530 / DSM 19775 / NCTC 10195 / G37) (Mycoplasmoides genitalium).